Consider the following 133-residue polypeptide: UPF0102 protein CYA_0680 (133 aa).

The protein belongs to the UPF0102 family.

The polypeptide is UPF0102 protein CYA_0680 (Synechococcus sp. (strain JA-3-3Ab) (Cyanobacteria bacterium Yellowstone A-Prime)).